Consider the following 124-residue polypeptide: Small ribosomal subunit protein uS12 (124 aa).

3-methylthioaspartic acid is present on Asp-89.

It belongs to the universal ribosomal protein uS12 family. Part of the 30S ribosomal subunit. Contacts proteins S8 and S17. May interact with IF1 in the 30S initiation complex.

Functionally, with S4 and S5 plays an important role in translational accuracy. In terms of biological role, interacts with and stabilizes bases of the 16S rRNA that are involved in tRNA selection in the A site and with the mRNA backbone. Located at the interface of the 30S and 50S subunits, it traverses the body of the 30S subunit contacting proteins on the other side and probably holding the rRNA structure together. The combined cluster of proteins S8, S12 and S17 appears to hold together the shoulder and platform of the 30S subunit. The sequence is that of Small ribosomal subunit protein uS12 from Psychrobacter sp. (strain PRwf-1).